The chain runs to 278 residues: Large ribosomal subunit protein uL2 (278 aa).

The interval 201-278 (HGNINDGKAG…IMRSRHQRKK (78 aa)) is disordered. The span at 210-221 (GRSRWRGKRPHV) shows a compositional bias: basic residues.

The protein belongs to the universal ribosomal protein uL2 family. As to quaternary structure, part of the 50S ribosomal subunit. Forms a bridge to the 30S subunit in the 70S ribosome.

One of the primary rRNA binding proteins. Required for association of the 30S and 50S subunits to form the 70S ribosome, for tRNA binding and peptide bond formation. It has been suggested to have peptidyltransferase activity; this is somewhat controversial. Makes several contacts with the 16S rRNA in the 70S ribosome. In Sinorhizobium fredii (strain NBRC 101917 / NGR234), this protein is Large ribosomal subunit protein uL2.